We begin with the raw amino-acid sequence, 672 residues long: Acetoacetyl-CoA synthetase (672 aa).

This sequence belongs to the ATP-dependent AMP-binding enzyme family.

Its subcellular location is the cytoplasm. The protein resides in the cytosol. The catalysed reaction is acetoacetate + ATP + CoA = acetoacetyl-CoA + AMP + diphosphate. In terms of biological role, activates acetoacetate to acetoacetyl-CoA. This chain is Acetoacetyl-CoA synthetase (aacs), found in Xenopus tropicalis (Western clawed frog).